The chain runs to 124 residues: Small ribosomal subunit protein uS12 (124 aa).

The segment at 1–32 (MPTIQQLVRKGRKDKATKTKTPALKGSPQRRG) is disordered. The residue at position 89 (Asp-89) is a 3-methylthioaspartic acid. The disordered stretch occupies residues 105-124 (QGVRGRQQARSRYGAKKEKK). Positions 111-124 (QQARSRYGAKKEKK) are enriched in basic residues.

Belongs to the universal ribosomal protein uS12 family. In terms of assembly, part of the 30S ribosomal subunit. Contacts proteins S8 and S17. May interact with IF1 in the 30S initiation complex.

Functionally, with S4 and S5 plays an important role in translational accuracy. In terms of biological role, interacts with and stabilizes bases of the 16S rRNA that are involved in tRNA selection in the A site and with the mRNA backbone. Located at the interface of the 30S and 50S subunits, it traverses the body of the 30S subunit contacting proteins on the other side and probably holding the rRNA structure together. The combined cluster of proteins S8, S12 and S17 appears to hold together the shoulder and platform of the 30S subunit. The polypeptide is Small ribosomal subunit protein uS12 (Beutenbergia cavernae (strain ATCC BAA-8 / DSM 12333 / CCUG 43141 / JCM 11478 / NBRC 16432 / NCIMB 13614 / HKI 0122)).